Here is a 287-residue protein sequence, read N- to C-terminus: Beta-lactamase GES-2 (287 aa).

The first 18 residues, 1–18 (MRFIHALLLAGIAHSAYA), serve as a signal peptide directing secretion. Cys63 and Cys233 are oxidised to a cystine. Ser64 functions as the Nucleophile; acyl-ester intermediate in the catalytic mechanism. A beta-lactam is bound by residues Lys67, Ser125, and Glu161.

This sequence belongs to the class-A beta-lactamase family.

It carries out the reaction a beta-lactam + H2O = a substituted beta-amino acid. With respect to regulation, inhibited by the beta-lactamase-blocking agents clavulanic acid, sulbactam and tazobactam. Functionally, extended-spectrum beta-lactamase (ESBL) which confers resistance to penicillins, as well as first, third and fourth-generation cephalosporins. Has modest carbapenem-hydrolyzing activity. Has cefotaxime-hydrolyzing activity. The polypeptide is Beta-lactamase GES-2 (Pseudomonas aeruginosa).